The sequence spans 389 residues: Na(+)/H(+) antiporter NhaA (389 aa).

A run of 11 helical transmembrane segments spans residues 17–37 (ILLL…LAGL), 59–79 (LLLW…GLEV), 95–115 (SLPT…YLLF), 124–144 (VGWA…MALL), 154–174 (VFLL…IALF), 177–197 (SDLS…LVAL), 213–233 (LVLW…GVII), 261–281 (FLIL…NMSL), 287–307 (PVPV…VMLF), 328–348 (IAPV…IASL), and 363–383 (LGTL…LSKV).

It belongs to the NhaA Na(+)/H(+) (TC 2.A.33) antiporter family.

The protein resides in the cell inner membrane. The enzyme catalyses Na(+)(in) + 2 H(+)(out) = Na(+)(out) + 2 H(+)(in). Na(+)/H(+) antiporter that extrudes sodium in exchange for external protons. This chain is Na(+)/H(+) antiporter NhaA, found in Shewanella sp. (strain ANA-3).